Here is an 86-residue protein sequence, read N- to C-terminus: Elongation factor 1-beta (86 aa).

This sequence belongs to the EF-1-beta/EF-1-delta family.

Its function is as follows. Promotes the exchange of GDP for GTP in EF-1-alpha/GDP, thus allowing the regeneration of EF-1-alpha/GTP that could then be used to form the ternary complex EF-1-alpha/GTP/AAtRNA. This chain is Elongation factor 1-beta, found in Methanocorpusculum labreanum (strain ATCC 43576 / DSM 4855 / Z).